Reading from the N-terminus, the 249-residue chain is Homeobox protein TGIF2LX (249 aa).

Disordered stretches follow at residues 1–62 and 126–192; these read MEAA…KRKG and DPIV…KLTV. Over residues 9–27 the composition is skewed to basic and acidic residues; the sequence is AETRSRVEKDSRRAKKDSP. Over residues 28–46 the composition is skewed to polar residues; the sequence is AKTQSPAQDTSIMLRNNAD. Positions 55–118 form a DNA-binding region, homeobox; TALE-type; the sequence is EHKKKRKGYL…INARRRILPD (64 aa). Over residues 159-172 the composition is skewed to polar residues; that stretch reads DNVQSLPLRSSPKG.

The protein belongs to the TALE/TGIF homeobox family.

It localises to the nucleus. Functionally, may have a transcription role in testis. The sequence is that of Homeobox protein TGIF2LX (TGIF2LX) from Macaca fascicularis (Crab-eating macaque).